The chain runs to 442 residues: Cell division protein FtsZ (442 aa).

Residues 18 to 22 (GGGVN), 105 to 107 (GTG), Glu-136, Arg-140, and Asp-184 each bind GTP. A compositionally biased stretch (low complexity) spans 329-341 (AAPAAEPVQQQVP). The segment at 329–442 (AAPAAEPVQQ…DDLDVPSFLQ (114 aa)) is disordered. 2 stretches are compositionally biased toward basic and acidic residues: residues 349-362 (PEKESIFGGAREEN) and 390-431 (NDRD…RDDR).

It belongs to the FtsZ family. As to quaternary structure, homodimer. Polymerizes to form a dynamic ring structure in a strictly GTP-dependent manner. Interacts directly with several other division proteins.

The protein resides in the cytoplasm. Functionally, essential cell division protein that forms a contractile ring structure (Z ring) at the future cell division site. The regulation of the ring assembly controls the timing and the location of cell division. One of the functions of the FtsZ ring is to recruit other cell division proteins to the septum to produce a new cell wall between the dividing cells. Binds GTP and shows GTPase activity. The polypeptide is Cell division protein FtsZ (Corynebacterium glutamicum (strain ATCC 13032 / DSM 20300 / JCM 1318 / BCRC 11384 / CCUG 27702 / LMG 3730 / NBRC 12168 / NCIMB 10025 / NRRL B-2784 / 534)).